The chain runs to 334 residues: Glycerol-3-phosphate dehydrogenase [NAD(P)+] (334 aa).

NADPH-binding residues include Trp-13, Arg-33, and Lys-106. The sn-glycerol 3-phosphate site is built by Lys-106, Gly-137, and Ser-139. An NADPH-binding site is contributed by Ala-141. Sn-glycerol 3-phosphate-binding residues include Lys-192, Asp-245, Ser-255, Arg-256, and Asn-257. The Proton acceptor role is filled by Lys-192. Arg-256 is a binding site for NADPH. The NADPH site is built by Val-280 and Glu-282.

It belongs to the NAD-dependent glycerol-3-phosphate dehydrogenase family.

The protein resides in the cytoplasm. The enzyme catalyses sn-glycerol 3-phosphate + NAD(+) = dihydroxyacetone phosphate + NADH + H(+). It carries out the reaction sn-glycerol 3-phosphate + NADP(+) = dihydroxyacetone phosphate + NADPH + H(+). The protein operates within membrane lipid metabolism; glycerophospholipid metabolism. Its function is as follows. Catalyzes the reduction of the glycolytic intermediate dihydroxyacetone phosphate (DHAP) to sn-glycerol 3-phosphate (G3P), the key precursor for phospholipid synthesis. The chain is Glycerol-3-phosphate dehydrogenase [NAD(P)+] from Chlamydia trachomatis serovar A (strain ATCC VR-571B / DSM 19440 / HAR-13).